Here is a 203-residue protein sequence, read N- to C-terminus: Outer-membrane lipoprotein carrier protein (203 aa).

A signal peptide spans 1 to 21 (MKKLAITCALLSGMVVSQVWA).

The protein belongs to the LolA family. Monomer.

The protein resides in the periplasm. In terms of biological role, participates in the translocation of lipoproteins from the inner membrane to the outer membrane. Only forms a complex with a lipoprotein if the residue after the N-terminal Cys is not an aspartate (The Asp acts as a targeting signal to indicate that the lipoprotein should stay in the inner membrane). This chain is Outer-membrane lipoprotein carrier protein, found in Klebsiella pneumoniae subsp. pneumoniae (strain ATCC 700721 / MGH 78578).